The following is a 565-amino-acid chain: NAD-dependent malic enzyme (565 aa).

Residue Tyr104 is the Proton donor of the active site. Arg157 provides a ligand contact to NAD(+). The active-site Proton acceptor is Lys175. Residues Glu246, Asp247, and Asp270 each coordinate a divalent metal cation. NAD(+)-binding residues include Asp270 and Asn418.

It belongs to the malic enzymes family. As to quaternary structure, homotetramer. Mg(2+) serves as cofactor. Mn(2+) is required as a cofactor.

It carries out the reaction (S)-malate + NAD(+) = pyruvate + CO2 + NADH. The catalysed reaction is oxaloacetate + H(+) = pyruvate + CO2. The polypeptide is NAD-dependent malic enzyme (Salmonella heidelberg (strain SL476)).